Here is a 309-residue protein sequence, read N- to C-terminus: Sulfur oxygenase/reductase (309 aa).

Cysteine 31 carries the cysteine persulfide modification. Residues histidine 86, histidine 90, and glutamate 114 each contribute to the Fe cation site.

As to quaternary structure, homoicosatetramer. The resulting structure is a hollow sphere where catalysis takes place in the inside cavity. Fe cation is required as a cofactor.

It is found in the cytoplasm. The catalysed reaction is 4 sulfur + O2 + 4 H2O = 2 hydrogen sulfide + 2 sulfite + 6 H(+). Its activity is regulated as follows. Inhibited by zinc. Catalyzes the simultaneous oxidation and reduction of elemental sulfur in the presence of oxygen, with sulfite and hydrogen sulfide as products. The protein is Sulfur oxygenase/reductase (sor) of Acidianus ambivalens (Desulfurolobus ambivalens).